Consider the following 448-residue polypeptide: Fibulin-5 (448 aa).

The first 23 residues, 1 to 23 (MPGIKRILTVTILALCLPSPGNA), serve as a signal peptide directing secretion. In terms of domain architecture, EGF-like 1; calcium-binding spans 42-82 (DIDECRTIPEACRGDMMCVNQNGRYLCIPRTNPVYRGPYSN). Cystine bridges form between cysteine 46-cysteine 59, cysteine 53-cysteine 68, cysteine 131-cysteine 144, cysteine 138-cysteine 153, cysteine 155-cysteine 166, cysteine 172-cysteine 181, cysteine 177-cysteine 190, cysteine 192-cysteine 205, cysteine 211-cysteine 221, cysteine 217-cysteine 230, cysteine 232-cysteine 245, cysteine 251-cysteine 262, cysteine 258-cysteine 271, cysteine 273-cysteine 286, cysteine 292-cysteine 305, cysteine 299-cysteine 314, and cysteine 320-cysteine 332. The Cell attachment site motif lies at 54-56 (RGD). The EGF-like 2; calcium-binding domain occupies 127-167 (DVDECATDSHQCNPTQICINTEGGYTCSCTDGYWLLEGQCL). One can recognise an EGF-like 3; calcium-binding domain in the interval 168–206 (DIDECRYGYCQQLCANVPGSYSCTCNPGFTLNEDGRSCQ). Positions 207 to 246 (DVNECATENPCVQTCVNTYGSFICRCDPGYELEEDGVHCS) constitute an EGF-like 4; calcium-binding domain. The interaction with LOXL1 stretch occupies residues 245–448 (CSDMDECSFS…LRIYVSQYPF (204 aa)). In terms of domain architecture, EGF-like 5; calcium-binding spans 247 to 287 (DMDECSFSEFLCQHECVNQPGTYFCSCPPGYILLDDNRSCQ). Asparagine 283 and asparagine 296 each carry an N-linked (GlcNAc...) asparagine glycan. In terms of domain architecture, EGF-like 6; calcium-binding spans 288–333 (DINECEHRNHTCNLQQTCYNLQGGFKCIDPIRCEEPYLRISDNRCM).

The protein belongs to the fibulin family. Homodimer. Monomer, homodimerizes in presence of Ca(2+). Interacts with ELN. Interacts (via N-terminus) with the integrins ITGAV/ITGB3, ITGAV/ITGB5 and ITGA9/ITGB1. Interacts with FBN1 (via N-terminal domain). Forms a ternary complex with ELN and FBN1. Interacts with EFEMP2 with moderate affinity. Interacts with LOXL1. N-glycosylated.

It is found in the secreted. The protein resides in the extracellular space. Its subcellular location is the extracellular matrix. Essential for elastic fiber formation, is involved in the assembly of continuous elastin (ELN) polymer and promotes the interaction of microfibrils and ELN. Stabilizes and organizes elastic fibers in the skin, lung and vasculature. Promotes adhesion of endothelial cells through interaction of integrins and the RGD motif. Vascular ligand for integrin receptors which may play a role in vascular development and remodeling. May act as an adapter that mediates the interaction between FBN1 and ELN. This is Fibulin-5 (FBLN5) from Pongo abelii (Sumatran orangutan).